A 302-amino-acid polypeptide reads, in one-letter code: MTLPPLSHLDRLEAESIHILREVAAEFRVPVMLYSVGKDSSVLLHLLLKAFAPSRPPIPLLHIDTRWKFREMIAFRDRRAAETGVDLRVHINPDGVMQDVGPISHGAAVHTDIMKTQGLKQALEHGGFDAAIGGARRDEEKSRAKERVFSFRTARHRWDPKNQRPELWNLYNARTGPGESVRVFPLSNWTELDIWLYIYREKIPVVPLYFAAPRPVVERDGAWIMVDDARLPLHPGETPQLRSVRFRTLGCYPLTGAIDSNADTLEAVIAEMLVNTSSERQGRMIDHAPGASMEQKKLEGYF.

Belongs to the PAPS reductase family. CysD subfamily. Heterodimer composed of CysD, the smaller subunit, and CysN.

The enzyme catalyses sulfate + ATP + H(+) = adenosine 5'-phosphosulfate + diphosphate. It functions in the pathway sulfur metabolism; hydrogen sulfide biosynthesis; sulfite from sulfate: step 1/3. With CysN forms the ATP sulfurylase (ATPS) that catalyzes the adenylation of sulfate producing adenosine 5'-phosphosulfate (APS) and diphosphate, the first enzymatic step in sulfur assimilation pathway. APS synthesis involves the formation of a high-energy phosphoric-sulfuric acid anhydride bond driven by GTP hydrolysis by CysN coupled to ATP hydrolysis by CysD. This Xanthomonas axonopodis pv. citri (strain 306) protein is Sulfate adenylyltransferase subunit 2.